A 718-amino-acid chain; its full sequence is Methionine--tRNA ligase (718 aa).

A 'HIGH' region motif is present at residues 27-37 (PYANGQIHIGH). Cys-158, Cys-161, Cys-171, and Cys-174 together coordinate Zn(2+). Residues 348 to 352 (KMSKS) carry the 'KMSKS' region motif. Residue Lys-351 participates in ATP binding. The 107-residue stretch at 612–718 (DFAKIDLRIA…SGAKPGMRVK (107 aa)) folds into the tRNA-binding domain.

This sequence belongs to the class-I aminoacyl-tRNA synthetase family. MetG type 1 subfamily. Homodimer. Requires Zn(2+) as cofactor.

Its subcellular location is the cytoplasm. It catalyses the reaction tRNA(Met) + L-methionine + ATP = L-methionyl-tRNA(Met) + AMP + diphosphate. Functionally, is required not only for elongation of protein synthesis but also for the initiation of all mRNA translation through initiator tRNA(fMet) aminoacylation. This is Methionine--tRNA ligase from Burkholderia orbicola (strain AU 1054).